The following is a 196-amino-acid chain: ATP-dependent Clp protease proteolytic subunit (196 aa).

Catalysis depends on Ser-101, which acts as the Nucleophile. His-126 is a catalytic residue.

The protein belongs to the peptidase S14 family. As to quaternary structure, component of the chloroplastic Clp protease core complex.

The protein resides in the plastid. The protein localises to the chloroplast stroma. The enzyme catalyses Hydrolysis of proteins to small peptides in the presence of ATP and magnesium. alpha-casein is the usual test substrate. In the absence of ATP, only oligopeptides shorter than five residues are hydrolyzed (such as succinyl-Leu-Tyr-|-NHMec, and Leu-Tyr-Leu-|-Tyr-Trp, in which cleavage of the -Tyr-|-Leu- and -Tyr-|-Trp bonds also occurs).. Functionally, cleaves peptides in various proteins in a process that requires ATP hydrolysis. Has a chymotrypsin-like activity. Plays a major role in the degradation of misfolded proteins. This Panax ginseng (Korean ginseng) protein is ATP-dependent Clp protease proteolytic subunit.